Reading from the N-terminus, the 149-residue chain is Large ribosomal subunit protein uL15 (149 aa).

A disordered region spans residues 1–54 (MSLKLHNLKPTPNSRPEKHRKGRGHAAGKGKQAGKGQSGQNKRKGHRLGFEGGQ). Residues 17 to 28 (EKHRKGRGHAAG) are compositionally biased toward basic residues.

Belongs to the universal ribosomal protein uL15 family. As to quaternary structure, part of the 50S ribosomal subunit.

In terms of biological role, binds to the 23S rRNA. The chain is Large ribosomal subunit protein uL15 from Mycoplasmopsis synoviae (strain 53) (Mycoplasma synoviae).